Reading from the N-terminus, the 457-residue chain is Bifunctional protein GlmU (457 aa).

The pyrophosphorylase stretch occupies residues Met-1–Arg-229. Residues Leu-8–Gly-11, Lys-22, Gln-72, and Gly-77–Thr-78 contribute to the UDP-N-acetyl-alpha-D-glucosamine site. Asp-102 is a Mg(2+) binding site. Gly-139, Glu-154, Asn-169, and Asn-227 together coordinate UDP-N-acetyl-alpha-D-glucosamine. Asn-227 serves as a coordination point for Mg(2+). A linker region spans residues Arg-230–Ser-250. Residues Gly-251–Val-457 are N-acetyltransferase. UDP-N-acetyl-alpha-D-glucosamine contacts are provided by Arg-332 and Lys-350. The active-site Proton acceptor is His-362. The UDP-N-acetyl-alpha-D-glucosamine site is built by Tyr-365 and Asn-376. Residues Asn-385 to Tyr-386, Ser-404, Ala-422, and Arg-439 each bind acetyl-CoA.

The protein in the N-terminal section; belongs to the N-acetylglucosamine-1-phosphate uridyltransferase family. This sequence in the C-terminal section; belongs to the transferase hexapeptide repeat family. Homotrimer. Mg(2+) is required as a cofactor.

The protein localises to the cytoplasm. The catalysed reaction is alpha-D-glucosamine 1-phosphate + acetyl-CoA = N-acetyl-alpha-D-glucosamine 1-phosphate + CoA + H(+). It carries out the reaction N-acetyl-alpha-D-glucosamine 1-phosphate + UTP + H(+) = UDP-N-acetyl-alpha-D-glucosamine + diphosphate. The protein operates within nucleotide-sugar biosynthesis; UDP-N-acetyl-alpha-D-glucosamine biosynthesis; N-acetyl-alpha-D-glucosamine 1-phosphate from alpha-D-glucosamine 6-phosphate (route II): step 2/2. It participates in nucleotide-sugar biosynthesis; UDP-N-acetyl-alpha-D-glucosamine biosynthesis; UDP-N-acetyl-alpha-D-glucosamine from N-acetyl-alpha-D-glucosamine 1-phosphate: step 1/1. It functions in the pathway bacterial outer membrane biogenesis; LPS lipid A biosynthesis. In terms of biological role, catalyzes the last two sequential reactions in the de novo biosynthetic pathway for UDP-N-acetylglucosamine (UDP-GlcNAc). The C-terminal domain catalyzes the transfer of acetyl group from acetyl coenzyme A to glucosamine-1-phosphate (GlcN-1-P) to produce N-acetylglucosamine-1-phosphate (GlcNAc-1-P), which is converted into UDP-GlcNAc by the transfer of uridine 5-monophosphate (from uridine 5-triphosphate), a reaction catalyzed by the N-terminal domain. This Pelotomaculum thermopropionicum (strain DSM 13744 / JCM 10971 / SI) protein is Bifunctional protein GlmU.